A 373-amino-acid polypeptide reads, in one-letter code: Probable di-N-acetylchitobiase 1 (373 aa).

A signal peptide spans 1-20; the sequence is MKIFIIISLILTILIIQSKS. Positions 21-369 constitute a GH18 domain; the sequence is KECPCSNVEL…SGMWGALNSF (349 aa). An N-linked (GlcNAc...) asparagine glycan is attached at Asn-48. Chitin-binding positions include 53-54 and 82-85; these read PY and NGVR. N-linked (GlcNAc...) asparagine glycosylation occurs at Asn-99. The active-site Proton donor is the Glu-127. Chitin is bound by residues Tyr-128 and 191 to 194; that span reads MDYD. N-linked (GlcNAc...) asparagine glycans are attached at residues Asn-222, Asn-250, Asn-269, Asn-279, and Asn-288. Residue Trp-347 coordinates chitin.

The protein belongs to the glycosyl hydrolase 18 family.

It is found in the lysosome. Functionally, involved in the degradation of asparagine-linked glycoproteins. May hydrolyze of N-acetyl-beta-D-glucosamine (1-4)N-acetylglucosamine chitobiose core from the reducing end of the bond. The sequence is that of Probable di-N-acetylchitobiase 1 (ctbs1) from Dictyostelium discoideum (Social amoeba).